The sequence spans 79 residues: Putative membrane protein insertion efficiency factor (79 aa).

Belongs to the UPF0161 family.

It localises to the cell inner membrane. In terms of biological role, could be involved in insertion of integral membrane proteins into the membrane. The polypeptide is Putative membrane protein insertion efficiency factor (Prochlorococcus marinus (strain NATL2A)).